A 190-amino-acid polypeptide reads, in one-letter code: Thioredoxin F-type, chloroplastic (190 aa).

Positions 1 to 31 (MALHLSLSHQSWTSPAHPITSSDPTRSSVPG) are disordered. The N-terminal 77 residues, 1–77 (MALHLSLSHQ…SMEQALGTQE (77 aa)), are a transit peptide targeting the chloroplast. The span at 7–30 (LSHQSWTSPAHPITSSDPTRSSVP) shows a compositional bias: polar residues. In terms of domain architecture, Thioredoxin spans 78–189 (MEAIVGKVTE…LLEAIQAARS (112 aa)). Active-site nucleophile residues include Cys114 and Cys117. Cys114 and Cys117 form a disulfide bridge.

Belongs to the thioredoxin family. Plant F-type subfamily. As to quaternary structure, forms a complex with heterodimeric ferredoxin-thioredoxin reductase (FTR) and ferredoxin.

The protein resides in the plastid. It localises to the chloroplast. In terms of biological role, participates in various redox reactions through the reversible oxidation of the active center dithiol to a disulfide. The F form is known to activate a number of enzymes of the photosynthetic carbon cycle. The polypeptide is Thioredoxin F-type, chloroplastic (Spinacia oleracea (Spinach)).